The following is a 197-amino-acid chain: Thymidine kinase (197 aa).

ATP-binding positions include 9–16 and 83–86; these read AAMNAGKS and DESQ. The Proton acceptor role is filled by Glu84. Positions 141, 143, 178, and 181 each coordinate Zn(2+).

The protein belongs to the thymidine kinase family. As to quaternary structure, homotetramer.

The protein resides in the cytoplasm. The catalysed reaction is thymidine + ATP = dTMP + ADP + H(+). In Albidiferax ferrireducens (strain ATCC BAA-621 / DSM 15236 / T118) (Rhodoferax ferrireducens), this protein is Thymidine kinase.